The primary structure comprises 234 residues: Large ribosomal subunit protein uL1 (234 aa).

This sequence belongs to the universal ribosomal protein uL1 family. Part of the 50S ribosomal subunit.

Binds directly to 23S rRNA. The L1 stalk is quite mobile in the ribosome, and is involved in E site tRNA release. Functionally, protein L1 is also a translational repressor protein, it controls the translation of the L11 operon by binding to its mRNA. This Helicobacter acinonychis (strain Sheeba) protein is Large ribosomal subunit protein uL1.